A 107-amino-acid polypeptide reads, in one-letter code: uncharacterized protein (107 aa).

The segment at 87-107 (KNRNGPKAEKRRPYVRAHAKW) is disordered.

This is an uncharacterized protein from Saccharomyces cerevisiae (strain ATCC 204508 / S288c) (Baker's yeast).